Consider the following 272-residue polypeptide: NAD kinase (272 aa).

Asp62 functions as the Proton acceptor in the catalytic mechanism. NAD(+) is bound by residues 62–63 (DG), Arg67, 129–130 (NE), Arg140, Lys157, Asp159, 170–175 (SSYSSS), Ala194, and Gln229.

This sequence belongs to the NAD kinase family. A divalent metal cation serves as cofactor.

Its subcellular location is the cytoplasm. It carries out the reaction NAD(+) + ATP = ADP + NADP(+) + H(+). Involved in the regulation of the intracellular balance of NAD and NADP, and is a key enzyme in the biosynthesis of NADP. Catalyzes specifically the phosphorylation on 2'-hydroxyl of the adenosine moiety of NAD to yield NADP. In Thermoplasma volcanium (strain ATCC 51530 / DSM 4299 / JCM 9571 / NBRC 15438 / GSS1), this protein is NAD kinase.